Reading from the N-terminus, the 371-residue chain is Zygote-specific protein 3 (371 aa).

The signal sequence occupies residues 1–24; that stretch reads MLRSAGRVAAVALLALFALGCVSA. Asn-41 carries an N-linked (GlcNAc...) asparagine glycan. ANK repeat units follow at residues 62-91 and 94-123; these read TRRL…LARV and GTTT…DPNA. 2 consecutive WW domains span residues 159–187 and 283–313; these read EPGA…WAVP and YATP…WELP.

It is found in the endoplasmic reticulum lumen. In terms of biological role, may have a role in the remodeling of the endoplasmic reticulum upon zygote formation. The protein is Zygote-specific protein 3 (ZYS3) of Chlamydomonas reinhardtii (Chlamydomonas smithii).